Consider the following 511-residue polypeptide: Probable lipid II flippase MurJ (511 aa).

11 helical membrane passes run 25-45 (DILI…FISF), 85-105 (SSIL…GGFF), 133-153 (IMFP…ILNS), 156-178 (YFSI…SVFF), 245-265 (ISLI…ISWI), 271-291 (LIEF…FTSL), 315-335 (LIVS…VIIV), 356-376 (LYSC…AFYA), 400-420 (FLIF…TSWV), 442-462 (FIFI…LFVV), and 481-501 (LFFG…ILGI).

Belongs to the MurJ/MviN family.

The protein resides in the cell inner membrane. It functions in the pathway cell wall biogenesis; peptidoglycan biosynthesis. Functionally, involved in peptidoglycan biosynthesis. Transports lipid-linked peptidoglycan precursors from the inner to the outer leaflet of the cytoplasmic membrane. This Buchnera aphidicola subsp. Acyrthosiphon pisum (strain APS) (Acyrthosiphon pisum symbiotic bacterium) protein is Probable lipid II flippase MurJ.